The following is an 848-amino-acid chain: Leucine--tRNA ligase (848 aa).

The short motif at 41–51 (PYPSGRIHMGH) is the 'HIGH' region element. The 'KMSKS' region signature appears at 619–623 (KMSKS). Lys-622 provides a ligand contact to ATP.

The protein belongs to the class-I aminoacyl-tRNA synthetase family.

The protein resides in the cytoplasm. The enzyme catalyses tRNA(Leu) + L-leucine + ATP = L-leucyl-tRNA(Leu) + AMP + diphosphate. The protein is Leucine--tRNA ligase of Roseobacter denitrificans (strain ATCC 33942 / OCh 114) (Erythrobacter sp. (strain OCh 114)).